The chain runs to 149 residues: Large ribosomal subunit protein uL15 (149 aa).

The disordered stretch occupies residues 30-63; the sequence is GLGKTAGRGHKGSFARKGGGKIKPGFEGGQTPMQ. Residues 36 to 49 show a composition bias toward basic residues; that stretch reads GRGHKGSFARKGGG.

It belongs to the universal ribosomal protein uL15 family. As to quaternary structure, part of the 50S ribosomal subunit.

Its function is as follows. Binds to the 23S rRNA. This chain is Large ribosomal subunit protein uL15, found in Xylella fastidiosa (strain 9a5c).